The primary structure comprises 248 residues: ATP synthase subunit a, chloroplastic (248 aa).

5 helical membrane-spanning segments follow: residues 38 to 58 (QVLLTSWVVIAVLLGSATIAV), 96 to 116 (VPFIGTMFLFIFVSNWSGALL), 135 to 155 (INTTVALALLTSVAYFYAGLT), 200 to 220 (LVVAVLVSLVPLIVPIPVMFL), and 221 to 241 (GLFTSGIQALIFATLAAAYIG).

This sequence belongs to the ATPase A chain family. In terms of assembly, F-type ATPases have 2 components, CF(1) - the catalytic core - and CF(0) - the membrane proton channel. CF(1) has five subunits: alpha(3), beta(3), gamma(1), delta(1), epsilon(1). CF(0) has four main subunits: a, b, b' and c.

Its subcellular location is the plastid. It is found in the chloroplast thylakoid membrane. Its function is as follows. Key component of the proton channel; it plays a direct role in the translocation of protons across the membrane. This is ATP synthase subunit a, chloroplastic from Pinus thunbergii (Japanese black pine).